A 1446-amino-acid chain; its full sequence is ABC-type transporter oblD (1446 aa).

N-linked (GlcNAc...) asparagine glycosylation is found at asparagine 9, asparagine 28, asparagine 222, asparagine 281, and asparagine 305. Positions 104–357 constitute an ABC transporter 1 domain; it reads LEVLSLVSKA…FLDMGFVCPD (254 aa). Helical transmembrane passes span 468-488, 502-522, 548-568, 577-597, 610-630, and 719-739; these read VTISSVFGNTIISLVIASIFY, ALLFFAVLMNALGCGLEMLTL, MIMDLPYKIINAITSNIVLYF, GAFFFFVFTSFVLTLTMSMFF, ALPFSAVLLLGLSMYTGFTIP, and IGVIFAYMFLLAAVYLVATDF. The region spanning 796 to 1038 is the ABC transporter 2 domain; the sequence is FQWKDVCFDI…ILIDYFVRNG (243 aa). 832–839 is a binding site for ATP; the sequence is GVSGAGKT. Helical transmembrane passes span 1147-1167, 1177-1197, 1217-1237, 1265-1285, and 1301-1321; these read ALCVLSALFVGFSLFHTPNTI, IFMLLTVFGQLIQQIMPHFVA, FIISNIVVELPWNSLMSVLMF, LMVWTFLLFSSTFAHFMIAAF, and LCLIFCGVLATPGQLPGFWIF. Asparagine 1344 and asparagine 1359 each carry an N-linked (GlcNAc...) asparagine glycan. The helical transmembrane segment at 1412–1432 threads the bilayer; it reads FGLMWVFIVFNIFAACLLYWW.

This sequence belongs to the ABC transporter superfamily. ABCG family. PDR (TC 3.A.1.205) subfamily.

Its subcellular location is the cell membrane. Functionally, ABC-type transporter; part of the gene cluster that mediates the biosynthesis of the sesterterpenes ophiobolins, fungal phytotoxins with potential anti-cancer activities. Acts as a specific transporter involved in ophiobolins secretion. The chain is ABC-type transporter oblD from Aspergillus clavatus (strain ATCC 1007 / CBS 513.65 / DSM 816 / NCTC 3887 / NRRL 1 / QM 1276 / 107).